The chain runs to 433 residues: NADH-quinone oxidoreductase subunit D (433 aa).

It belongs to the complex I 49 kDa subunit family. As to quaternary structure, NDH-1 is composed of 14 different subunits. Subunits NuoB, C, D, E, F, and G constitute the peripheral sector of the complex.

It localises to the cell membrane. It carries out the reaction a quinone + NADH + 5 H(+)(in) = a quinol + NAD(+) + 4 H(+)(out). NDH-1 shuttles electrons from NADH, via FMN and iron-sulfur (Fe-S) centers, to quinones in the respiratory chain. The immediate electron acceptor for the enzyme in this species is believed to be a menaquinone. Couples the redox reaction to proton translocation (for every two electrons transferred, four hydrogen ions are translocated across the cytoplasmic membrane), and thus conserves the redox energy in a proton gradient. The polypeptide is NADH-quinone oxidoreductase subunit D (Cutibacterium acnes (strain DSM 16379 / KPA171202) (Propionibacterium acnes)).